The chain runs to 97 residues: uncharacterized protein (97 aa).

S2 carries the post-translational modification N-acetylserine.

This is an uncharacterized protein from Mycobacterium tuberculosis (strain ATCC 25618 / H37Rv).